A 221-amino-acid chain; its full sequence is Probable glutathione S-transferase parC (221 aa).

The GST N-terminal domain occupies Glu-4–Ala-83. Residues Ser-14, Lys-41, Ile-55, and Glu-67–Ser-68 each bind glutathione. Positions Asp-90–Leu-214 constitute a GST C-terminal domain.

Belongs to the GST superfamily. Phi family. Abundant in seedlings and roots. It is also found in the shoot tips, flowers and leaves.

It carries out the reaction RX + glutathione = an S-substituted glutathione + a halide anion + H(+). In terms of biological role, conjugation of reduced glutathione to a wide number of exogenous and endogenous hydrophobic electrophiles. The protein is Probable glutathione S-transferase parC (PARC) of Nicotiana tabacum (Common tobacco).